Here is a 480-residue protein sequence, read N- to C-terminus: Chromosomal replication initiator protein DnaA (480 aa).

Positions 1 to 71 are domain I, interacts with DnaA modulators; the sequence is MKEFWQTCVS…EALAAEWYQR (71 aa). Residues 71-142 form a domain II region; that stretch reads RPVQVTFELP…DAANIVYERS (72 aa). The tract at residues 143–359 is domain III, AAA+ region; sequence RLNTDLTFEN…GALRKVLAYA (217 aa). Gly-187, Gly-189, Lys-190, and Thr-191 together coordinate ATP. The tract at residues 360–480 is domain IV, binds dsDNA; sequence RFHGRDVLTV…LHVLEQTLKG (121 aa).

The protein belongs to the DnaA family. As to quaternary structure, oligomerizes as a right-handed, spiral filament on DNA at oriC.

The protein localises to the cytoplasm. In terms of biological role, plays an essential role in the initiation and regulation of chromosomal replication. ATP-DnaA binds to the origin of replication (oriC) to initiate formation of the DNA replication initiation complex once per cell cycle. Binds the DnaA box (a 9 base pair repeat at the origin) and separates the double-stranded (ds)DNA. Forms a right-handed helical filament on oriC DNA; dsDNA binds to the exterior of the filament while single-stranded (ss)DNA is stabiized in the filament's interior. The ATP-DnaA-oriC complex binds and stabilizes one strand of the AT-rich DNA unwinding element (DUE), permitting loading of DNA polymerase. After initiation quickly degrades to an ADP-DnaA complex that is not apt for DNA replication. Binds acidic phospholipids. In Bordetella bronchiseptica (strain ATCC BAA-588 / NCTC 13252 / RB50) (Alcaligenes bronchisepticus), this protein is Chromosomal replication initiator protein DnaA.